Here is a 329-residue protein sequence, read N- to C-terminus: MTENQNVYDITIIGGGPTGLFTAFYGGMRQASVKIIESLPQLGGQLSALYPEKYIYDVAGFPKVRAQELVDNLKEQMKKFDPTICLEEAVETLEKQADGVFKLVTNKQTHYSKSVIITAGNGAFQPRRLELDGAQKFEKKNLHYFVDDMNKFARKRVVVFGGGDSAVDWTLMLEPIAEQVTIIHRRDKFRAHEHSVENLINSRADIKTPYVPVELIGEEQIEQVVLQHVKTEEKVVIDVDDVIVNYGFVSSLGPIKNWGLNIQKNSIVVNSKMETNIPGIYAAGDVCTYEGKVKLIACGFGEAPTAVNNAKAYFDPSAKLQPMHSSSMF.

FAD is bound by residues threonine 18, glutamate 37, glutamine 45, tyrosine 50, valine 90, phenylalanine 124, aspartate 285, and serine 326.

Belongs to the ferredoxin--NADP reductase type 2 family. Homodimer. FAD serves as cofactor.

It catalyses the reaction 2 reduced [2Fe-2S]-[ferredoxin] + NADP(+) + H(+) = 2 oxidized [2Fe-2S]-[ferredoxin] + NADPH. The protein is Ferredoxin--NADP reductase 2 of Bacillus cytotoxicus (strain DSM 22905 / CIP 110041 / 391-98 / NVH 391-98).